The following is a 310-amino-acid chain: Keratin, type II cytoskeletal 8 (310 aa).

The interval 1 to 38 (QRTLKVSSSGPRSFSSRSFSSGPSSRISSSSYSRVGSN) is disordered. Residue lysine 5 forms a Glycyl lysine isopeptide (Lys-Gly) (interchain with G-Cter in SUMO2) linkage. 4 positions are modified to phosphoserine: serine 7, serine 9, serine 15, and serine 16. Residues 7–38 (SSSGPRSFSSRSFSSGPSSRISSSSYSRVGSN) are compositionally biased toward low complexity. Position 17 is an omega-N-methylarginine (arginine 17). Phosphoserine occurs at positions 18, 21, and 25. Arginine 26 is modified (omega-N-methylarginine). Phosphoserine occurs at positions 28, 31, and 33. Arginine 34 bears the Omega-N-methylarginine mark. Serine 37 is subject to Phosphoserine. Arginine 42 carries the post-translational modification Asymmetric dimethylarginine; alternate. Arginine 42 carries the omega-N-methylarginine; alternate modification. Residues 92–127 (EKEQIKTLNNKFASFIDKVRFLEQQNKILETKWSFL) are coil 1A. The 219-residue stretch at 92–310 (EKEQIKTLNN…LRHTKTEISE (219 aa)) folds into the IF rod domain. Lysine 102 carries the post-translational modification N6-malonyllysine. Residues lysine 123 and lysine 131 each participate in a glycyl lysine isopeptide (Lys-Gly) (interchain with G-Cter in SUMO2) cross-link. The linker 1 stretch occupies residues 128 to 144 (QQQKTSQSNLDGLFEKY). The tract at residues 145–236 (ITNLRRQLDS…HLYEEEIKEM (92 aa)) is coil 1B. Lysine 198 is covalently cross-linked (Glycyl lysine isopeptide (Lys-Gly) (interchain with G-Cter in SUMO1); alternate). Lysine 198 is covalently cross-linked (Glycyl lysine isopeptide (Lys-Gly) (interchain with G-Cter in SUMO2); alternate). The residue at position 208 (lysine 208) is an N6-acetyllysine. Tyrosine 229 carries the post-translational modification Phosphotyrosine. A linker 12 region spans residues 237 to 260 (QSQISDTSVVVSMDNSRSLDLDGI). Phosphoserine is present on residues serine 254 and serine 275. Residues 261–310 (IADVRAQYEEIANRSRAEAETMYQIKYEELQLLAGKHGDDLRHTKTEISE) are coil 2. Residue lysine 286 forms a Glycyl lysine isopeptide (Lys-Gly) (interchain with G-Cter in SUMO2) linkage. Residue lysine 296 forms a Glycyl lysine isopeptide (Lys-Gly) (interchain with G-Cter in SUMO2); alternate linkage. At lysine 296 the chain carries N6-acetyllysine; alternate. Residue lysine 305 forms a Glycyl lysine isopeptide (Lys-Gly) (interchain with G-Cter in SUMO2) linkage.

It belongs to the intermediate filament family. Heterotetramer of two type I and two type II keratins. Forms a heterodimer with KRT18. Associates with KRT20. Interacts with PNN. When associated with KRT19, interacts with DMD. Interacts with APEX1. Interacts with GPER1. Interacts with EPPK1. Interacts with PKP1 and PKP2. O-glycosylated. O-GlcNAcylation at multiple sites increases solubility, and decreases stability by inducing proteasomal degradation. In terms of processing, O-glycosylated (O-GlcNAcylated), in a cell cycle-dependent manner.

The protein resides in the cytoplasm. Its subcellular location is the nucleus. It is found in the nucleoplasm. It localises to the nucleus matrix. Its function is as follows. Together with KRT19, helps to link the contractile apparatus to dystrophin at the costameres of striated muscle. The protein is Keratin, type II cytoskeletal 8 of Potorous tridactylus (Potoroo).